The sequence spans 293 residues: Calcium uniporter protein 2, mitochondrial (293 aa).

Residues 1–33 (MWSVMGLVRRTAMSSTVNKASPVRSLLGGFRCL) constitute a mitochondrion transit peptide. Residues 168 to 188 (ILWGGLGYSVVQIGIFVRLTF) traverse the membrane as a helical segment. The short motif at 193-201 (WDVMEPITF) is the Selectivity filter element. Residue Glu-197 participates in Ca(2+) binding. A helical transmembrane segment spans residues 198 to 218 (PITFFTTATGIIVGYAYFLMT).

It belongs to the MCU (TC 1.A.77) family.

Its subcellular location is the mitochondrion inner membrane. It catalyses the reaction Ca(2+)(in) = Ca(2+)(out). Its function is as follows. Mitochondrial inner membrane calcium uniporter that mediates calcium uptake into mitochondria. Constitutes a pore-forming and calcium-conducting subunit. Mitochondrial calcium homeostasis plays key roles in cellular physiology and regulates cell bioenergetics, cytoplasmic calcium signals and activation of cell death pathways. This is Calcium uniporter protein 2, mitochondrial from Arabidopsis thaliana (Mouse-ear cress).